A 297-amino-acid chain; its full sequence is ER membrane protein complex subunit 2 (297 aa).

Position 2 is an N-acetylalanine (Ala-2). TPR repeat units follow at residues 87-120, 155-188, and 192-225; these read HRVK…DPTN, QEAW…NPHN, and CQQY…NNRN. Lys-255 carries the N6-acetyllysine modification.

This sequence belongs to the EMC2 family. Component of the ER membrane protein complex (EMC). Interacts with WNK1 (via amphipathic alpha-helix region); promoting the ER membrane protein complex assembly by preventing EMC2 ubiquitination. Ubiquitinated when soluble in the cytoplasm, leading to its degradation by the proteasome. Interaction with EMC2 prevents its ubiquitination and degradation.

The protein localises to the endoplasmic reticulum membrane. Functionally, part of the endoplasmic reticulum membrane protein complex (EMC) that enables the energy-independent insertion into endoplasmic reticulum membranes of newly synthesized membrane proteins. Preferentially accommodates proteins with transmembrane domains that are weakly hydrophobic or contain destabilizing features such as charged and aromatic residues. Involved in the cotranslational insertion of multi-pass membrane proteins in which stop-transfer membrane-anchor sequences become ER membrane spanning helices. It is also required for the post-translational insertion of tail-anchored/TA proteins in endoplasmic reticulum membranes. By mediating the proper cotranslational insertion of N-terminal transmembrane domains in an N-exo topology, with translocated N-terminus in the lumen of the ER, controls the topology of multi-pass membrane proteins like the G protein-coupled receptors. By regulating the insertion of various proteins in membranes, it is indirectly involved in many cellular processes. This chain is ER membrane protein complex subunit 2, found in Homo sapiens (Human).